Here is a 1131-residue protein sequence, read N- to C-terminus: DNA polymerase II large subunit (1131 aa).

Belongs to the archaeal DNA polymerase II family. In terms of assembly, heterodimer of a large subunit and a small subunit.

It catalyses the reaction DNA(n) + a 2'-deoxyribonucleoside 5'-triphosphate = DNA(n+1) + diphosphate. It carries out the reaction Exonucleolytic cleavage in the 3'- to 5'-direction to yield nucleoside 5'-phosphates.. Functionally, possesses two activities: a DNA synthesis (polymerase) and an exonucleolytic activity that degrades single-stranded DNA in the 3'- to 5'-direction. Has a template-primer preference which is characteristic of a replicative DNA polymerase. This chain is DNA polymerase II large subunit, found in Methanococcus maripaludis (strain DSM 14266 / JCM 13030 / NBRC 101832 / S2 / LL).